A 151-amino-acid chain; its full sequence is Large ribosomal subunit protein bL9 (151 aa).

This sequence belongs to the bacterial ribosomal protein bL9 family.

Functionally, binds to the 23S rRNA. The polypeptide is Large ribosomal subunit protein bL9 (Francisella tularensis subsp. novicida (strain U112)).